A 502-amino-acid polypeptide reads, in one-letter code: Glutamate decarboxylase 1 (502 aa).

Ser-8 is subject to Phosphoserine. Lys-277 is modified (N6-(pyridoxal phosphate)lysine). Residues 469–502 are calmodulin-binding; that stretch reads LMVTVKKSDIDKQRDIITGWKKFVADRKKTSGIC.

This sequence belongs to the group II decarboxylase family. Homohexamer. Interacts with calmodulin with a 1:3 stoichiometry. Pyridoxal 5'-phosphate serves as cofactor. As to expression, expressed in roots. Detected at low levels in shoots of young seedlings. Not detected in the root tips or in the central vascular bundle in the elongating region of mature roots.

It carries out the reaction L-glutamate + H(+) = 4-aminobutanoate + CO2. With respect to regulation, up-regulated by calmodulin binding at physiological pH. Its function is as follows. Catalyzes the conversion of glutamate to 4-aminobutanoate (GABA). The calmodulin-binding is calcium-dependent and it is proposed to directly or indirectly form a calcium regulated control of GABA biosynthesis. The polypeptide is Glutamate decarboxylase 1 (GAD1) (Arabidopsis thaliana (Mouse-ear cress)).